The sequence spans 416 residues: Glutamate dehydrogenase A2 (416 aa).

Residue Lys-105 is part of the active site.

This sequence belongs to the Glu/Leu/Phe/Val dehydrogenases family. In terms of assembly, homohexamer.

The sequence is that of Glutamate dehydrogenase A2 (gdhA2) from Halobacterium salinarum (strain ATCC 700922 / JCM 11081 / NRC-1) (Halobacterium halobium).